Reading from the N-terminus, the 667-residue chain is Chaperone protein DnaK (667 aa).

Residue threonine 196 is modified to Phosphothreonine; by autocatalysis. 2 disordered regions span residues 495 to 525 (EANS…RKER) and 595 to 667 (AGEE…GDDE). Residues 506–525 (EKMKEEAEQHAEEDERRKER) are compositionally biased toward basic and acidic residues. Residues 595 to 612 (AGEEIREAQQQQAQQGAA) show a composition bias toward low complexity. Over residues 630–641 (GPAGGPTGGPAS) the composition is skewed to gly residues. A compositionally biased stretch (acidic residues) spans 647 to 667 (DSDEEDVQDADYEVVDEGDDE).

The protein belongs to the heat shock protein 70 family.

In terms of biological role, acts as a chaperone. This Salinibacter ruber (strain DSM 13855 / M31) protein is Chaperone protein DnaK.